The following is a 411-amino-acid chain: Tyrosine--tRNA ligase (411 aa).

Y34 is a binding site for L-tyrosine. The short motif at 39–48 (CTATSLHIGS) is the 'HIGH' region element. L-tyrosine-binding residues include Y171 and Q175. The 'KMSKS' region motif lies at 231-235 (KMGKT). K234 contributes to the ATP binding site. The S4 RNA-binding domain occupies 345-411 (ISAYKLFYNV…GKKRHILVKV (67 aa)).

This sequence belongs to the class-I aminoacyl-tRNA synthetase family. TyrS type 1 subfamily. As to quaternary structure, homodimer.

The protein localises to the cytoplasm. It catalyses the reaction tRNA(Tyr) + L-tyrosine + ATP = L-tyrosyl-tRNA(Tyr) + AMP + diphosphate + H(+). In terms of biological role, catalyzes the attachment of tyrosine to tRNA(Tyr) in a two-step reaction: tyrosine is first activated by ATP to form Tyr-AMP and then transferred to the acceptor end of tRNA(Tyr). The sequence is that of Tyrosine--tRNA ligase from Rickettsia typhi (strain ATCC VR-144 / Wilmington).